A 199-amino-acid polypeptide reads, in one-letter code: Large ribosomal subunit protein bL25 (199 aa).

Belongs to the bacterial ribosomal protein bL25 family. CTC subfamily. In terms of assembly, part of the 50S ribosomal subunit; part of the 5S rRNA/L5/L18/L25 subcomplex. Contacts the 5S rRNA. Binds to the 5S rRNA independently of L5 and L18.

Functionally, this is one of the proteins that binds to the 5S RNA in the ribosome where it forms part of the central protuberance. This Caulobacter sp. (strain K31) protein is Large ribosomal subunit protein bL25.